Reading from the N-terminus, the 228-residue chain is MATWANLGLQNSSSPLMEQLNFFHDHTLLILIMITVMIAYIMFMLFFNKFTNRYLLHGQTIEIIWTILPAIILMFIAFPSLRLLYLMDEINSPLITLKVIGHQWYWSYEYSNFLNLEFDSYMIPTNELDLNGFRLLDVDNRIILPMNNQIRILVTATDVLHSWTVPSLGVKIDATPGRLNQTNFLINQPGLFFGQCSEICGANHSFMPIVVESIPMNYFIKWISSQMN.

Over 1-26 (MATWANLGLQNSSSPLMEQLNFFHDH) the chain is Mitochondrial intermembrane. Residues 27 to 48 (TLLILIMITVMIAYIMFMLFFN) traverse the membrane as a helical segment. Topologically, residues 49 to 62 (KFTNRYLLHGQTIE) are mitochondrial matrix. The chain crosses the membrane as a helical span at residues 63-82 (IIWTILPAIILMFIAFPSLR). Residues 83 to 228 (LLYLMDEINS…FIKWISSQMN (146 aa)) are Mitochondrial intermembrane-facing. Positions 161, 196, 198, 200, 204, and 207 each coordinate Cu cation. A Mg(2+)-binding site is contributed by Glu-198.

It belongs to the cytochrome c oxidase subunit 2 family. In terms of assembly, component of the cytochrome c oxidase (complex IV, CIV), a multisubunit enzyme composed of a catalytic core of 3 subunits and several supernumerary subunits. The complex exists as a monomer or a dimer and forms supercomplexes (SCs) in the inner mitochondrial membrane with ubiquinol-cytochrome c oxidoreductase (cytochrome b-c1 complex, complex III, CIII). Cu cation serves as cofactor.

The protein localises to the mitochondrion inner membrane. It catalyses the reaction 4 Fe(II)-[cytochrome c] + O2 + 8 H(+)(in) = 4 Fe(III)-[cytochrome c] + 2 H2O + 4 H(+)(out). In terms of biological role, component of the cytochrome c oxidase, the last enzyme in the mitochondrial electron transport chain which drives oxidative phosphorylation. The respiratory chain contains 3 multisubunit complexes succinate dehydrogenase (complex II, CII), ubiquinol-cytochrome c oxidoreductase (cytochrome b-c1 complex, complex III, CIII) and cytochrome c oxidase (complex IV, CIV), that cooperate to transfer electrons derived from NADH and succinate to molecular oxygen, creating an electrochemical gradient over the inner membrane that drives transmembrane transport and the ATP synthase. Cytochrome c oxidase is the component of the respiratory chain that catalyzes the reduction of oxygen to water. Electrons originating from reduced cytochrome c in the intermembrane space (IMS) are transferred via the dinuclear copper A center (CU(A)) of subunit 2 and heme A of subunit 1 to the active site in subunit 1, a binuclear center (BNC) formed by heme A3 and copper B (CU(B)). The BNC reduces molecular oxygen to 2 water molecules using 4 electrons from cytochrome c in the IMS and 4 protons from the mitochondrial matrix. This Aedes aegypti (Yellowfever mosquito) protein is Cytochrome c oxidase subunit 2 (COII).